Here is a 311-residue protein sequence, read N- to C-terminus: Aspartate carbamoyltransferase catalytic subunit (311 aa).

2 residues coordinate carbamoyl phosphate: R59 and T60. K87 contacts L-aspartate. The carbamoyl phosphate site is built by R109, H139, and Q142. Residues R172 and R224 each contribute to the L-aspartate site. The carbamoyl phosphate site is built by A265 and P266.

Belongs to the aspartate/ornithine carbamoyltransferase superfamily. ATCase family. In terms of assembly, heterododecamer (2C3:3R2) of six catalytic PyrB chains organized as two trimers (C3), and six regulatory PyrI chains organized as three dimers (R2).

It catalyses the reaction carbamoyl phosphate + L-aspartate = N-carbamoyl-L-aspartate + phosphate + H(+). It participates in pyrimidine metabolism; UMP biosynthesis via de novo pathway; (S)-dihydroorotate from bicarbonate: step 2/3. In terms of biological role, catalyzes the condensation of carbamoyl phosphate and aspartate to form carbamoyl aspartate and inorganic phosphate, the committed step in the de novo pyrimidine nucleotide biosynthesis pathway. The sequence is that of Aspartate carbamoyltransferase catalytic subunit from Streptococcus pyogenes serotype M12 (strain MGAS2096).